The sequence spans 382 residues: MDSRPTIAEVDLAALRHNYDLVVRTIPRGCGILAVVKADAYGHGFMDIARELETLGVTAFGVAFLAEGIQLRKSGIDRPVLILGGVYPGQERKCVGFNLSTALFSLEQARVLDDAAGRLYRRARVHAKIDTGMGRLGIPHEEASAFFSALRELKHLDLEGIISHFASADELDEDGRRYSDLQASRFAAAVAAARHEGFEPRYVHIANSAAAFGMDLPFCNLVRPGIVLYGALPSGDFEGKMALKPIMRLRSSIAMLKWVEPGTSISYARRFTAPDRRLVASIPVGYADGYSRSLTNRGEVVVRGRRAPVVGTVCMDWIMADVTHVSGVTVGDEVTLLGCDQEGNCVRAEELAEWAGTIPYEIFCGISKRVPRVYLNPSIRHR.

Lys37 serves as the catalytic Proton acceptor; specific for D-alanine. The residue at position 37 (Lys37) is an N6-(pyridoxal phosphate)lysine. Arg135 lines the substrate pocket. Residue Tyr267 is the Proton acceptor; specific for L-alanine of the active site. Met315 lines the substrate pocket.

The protein belongs to the alanine racemase family. Pyridoxal 5'-phosphate serves as cofactor.

The enzyme catalyses L-alanine = D-alanine. The protein operates within amino-acid biosynthesis; D-alanine biosynthesis; D-alanine from L-alanine: step 1/1. In terms of biological role, catalyzes the interconversion of L-alanine and D-alanine. May also act on other amino acids. The chain is Alanine racemase (alr) from Geobacter sulfurreducens (strain ATCC 51573 / DSM 12127 / PCA).